The sequence spans 91 residues: Kazal-type trypsin inhibitor (91 aa).

A signal peptide spans 1–22 (MRHIGVFVGVLALALVLLVVEA). Residues 25–78 (DAERGVCACPRIYMPVCGSNLKTYNNDCLLRCEINSDLGRANNLRKIADQACDN) enclose the Kazal-like domain. Disulfide bonds link cysteine 31/cysteine 56, cysteine 33/cysteine 52, and cysteine 41/cysteine 76. Asparagine 78 is a glycosylation site (N-linked (GlcNAc...) asparagine).

Interacts with human PLG (plasmin). Female salivary gland. Female gut at 3 and 24 hours after blood feeding. Female carcass. Male tissues. Not detected in ovary and fat body at 3 and 24 hours after blood feeding.

Its subcellular location is the secreted. Anticoagulant protein that decreases host thrombin (F2) activity via an uncompetitive inhibition mechanism. Inhibits amidolytic activity of host plasmin (PLG). Inhibits amidolytic activity of host trypsin. Inhibits trypsin-like endogenous activity from gut of female mosquitoes 24 hours after feeding and weakly affects enzyme activity from gut 3 hours after feeding, suggesting a possible role as an inhibitor of endogenous proteases. In terms of biological role, (Microbial infection) Limits host plasmin-mediated enhancement of dengue virus type 2 infection in mosquito midgut. This Aedes aegypti (Yellowfever mosquito) protein is Kazal-type trypsin inhibitor.